The primary structure comprises 156 residues: RNA polymerase sigma factor SigS (156 aa).

Residues 29-44 (EYYQLLLIKMWQLSQI) carry the Polymerase core binding motif. The H-T-H motif DNA-binding region spans 126-145 (QYEIADIMSLSTSTIKLIKA).

It belongs to the sigma-70 factor family.

Functionally, sigma factors are initiation factors that promote the attachment of RNA polymerase to specific initiation sites and are then released. Sigma-S contributes to the protection against external stress, thus playing a role in cellular fitness and survival. The chain is RNA polymerase sigma factor SigS (sigS) from Staphylococcus aureus (strain MRSA252).